Consider the following 78-residue polypeptide: Toxin BmTxKS4 (78 aa).

An N-terminal signal peptide occupies residues 1–21 (MKLKISFLILVLFSVFFAIEG). Positions 22–32 (IIKWFPASVNG) are excised as a propeptide.

Post-translationally, contains 3 disulfide bonds. Expressed by the venom gland.

The protein resides in the secreted. Functionally, reversibly inhibits potassium channels. This is Toxin BmTxKS4 from Olivierus martensii (Manchurian scorpion).